Reading from the N-terminus, the 223-residue chain is Cuticular glutathione peroxidase (223 aa).

Positions 1–19 (MSAQLLILSHMVLLQLIVA) are cleaved as a signal peptide. N-linked (GlcNAc...) asparagine glycosylation is present at N39. The active site involves C74. N92 carries an N-linked (GlcNAc...) asparagine glycan.

Belongs to the glutathione peroxidase family. As to quaternary structure, homotetramer.

It is found in the secreted. The enzyme catalyses 2 glutathione + H2O2 = glutathione disulfide + 2 H2O. Functionally, could inhibit the oxidative burst of leukocytes and neutralize the secondary products of lipid peroxidation, thus providing the resistance of these parasites to immune effector mechanisms and their persistence in the mammalian host. It may also be involved in the formation of cross-linking residues such as dityrosine, trityrosine and isotrityrosine identified in cuticular collagen. Highly cross-linked external cortex may also serve to protect the parasite from immune attack. The chain is Cuticular glutathione peroxidase from Brugia malayi (Filarial nematode worm).